Reading from the N-terminus, the 230-residue chain is Heptaprenylglyceryl phosphate synthase (230 aa).

Lys12 is a binding site for sn-glycerol 1-phosphate. Mg(2+) contacts are provided by Asp14 and Thr40. Sn-glycerol 1-phosphate contacts are provided by residues 159 to 164, Gly189, and 209 to 210; these read YIEYSG and GD.

The protein belongs to the GGGP/HepGP synthase family. Group I subfamily. As to quaternary structure, homodimer. Mg(2+) is required as a cofactor.

It carries out the reaction sn-glycerol 1-phosphate + all-trans-heptaprenyl diphosphate = 3-heptaprenyl-sn-glycero-1-phosphate + diphosphate. It participates in membrane lipid metabolism; glycerophospholipid metabolism. In terms of biological role, prenyltransferase that catalyzes in vivo the transfer of the heptaprenyl moiety of heptaprenyl pyrophosphate (HepPP; 35 carbon atoms) to the C3 hydroxyl of sn-glycerol-1-phosphate (G1P), producing heptaprenylglyceryl phosphate (HepGP). This reaction is an ether-bond-formation step in the biosynthesis of archaea-type G1P-based membrane lipids found in Bacillales. The polypeptide is Heptaprenylglyceryl phosphate synthase (Staphylococcus aureus (strain JH1)).